The sequence spans 118 residues: Superoxide-generating NADPH oxidase light chain subunit (118 aa).

The next 4 helical transmembrane spans lie at 9 to 29, 36 to 56, 62 to 82, and 83 to 103; these read WAAMIGMAACWCLIAGGIMGI, IAIYSICVGGVLYPLLYPLSF, AIFHQYYVAAALMAGLSVLCY, and FLVPTMLAAMVMDISAVVFLI.

This sequence belongs to the p22phox family. As to quaternary structure, composed of a heavy chain and a light chain.

It localises to the cell membrane. Functionally, critical component of the membrane-bound oxidase of phagocytes that generates superoxide. The polypeptide is Superoxide-generating NADPH oxidase light chain subunit (cybA) (Dictyostelium discoideum (Social amoeba)).